The primary structure comprises 523 residues: UDP-glucuronosyltransferase 3A1 (523 aa).

Residues 1–23 (MAVGRKSLILSLLIQHFVLLHGA) form the signal peptide. Topologically, residues 24–483 (KILTVCFLGG…YSYQQPLYQQ (460 aa)) are extracellular. Asparagine 125 carries N-linked (GlcNAc...) asparagine glycosylation. A helical membrane pass occupies residues 484-504 (YLLDVFLFVCVCVIGACYLTV). Residues 505–523 (KLLKMFIQKLCSFRKLKQN) lie on the Cytoplasmic side of the membrane.

This sequence belongs to the UDP-glycosyltransferase family.

Its subcellular location is the membrane. It carries out the reaction glucuronate acceptor + UDP-alpha-D-glucuronate = acceptor beta-D-glucuronoside + UDP + H(+). In terms of biological role, UDP-glucuronosyltransferases catalyze phase II biotransformation reactions in which lipophilic substrates are conjugated with glucuronic acid to increase water solubility and enhance excretion. They are of major importance in the conjugation and subsequent elimination of potentially toxic xenobiotics and endogenous compounds. This Xenopus laevis (African clawed frog) protein is UDP-glucuronosyltransferase 3A1 (ugt3a1).